Reading from the N-terminus, the 143-residue chain is Large ribosomal subunit protein uL13 (143 aa).

This sequence belongs to the universal ribosomal protein uL13 family. Part of the 50S ribosomal subunit.

Its function is as follows. This protein is one of the early assembly proteins of the 50S ribosomal subunit, although it is not seen to bind rRNA by itself. It is important during the early stages of 50S assembly. This chain is Large ribosomal subunit protein uL13, found in Coprothermobacter proteolyticus (strain ATCC 35245 / DSM 5265 / OCM 4 / BT).